A 215-amino-acid polypeptide reads, in one-letter code: Ribosomal RNA small subunit methyltransferase G (215 aa).

S-adenosyl-L-methionine contacts are provided by residues Gly-78, Leu-83, Ala-128–Glu-129, and Arg-146.

This sequence belongs to the methyltransferase superfamily. RNA methyltransferase RsmG family.

Its subcellular location is the cytoplasm. The enzyme catalyses guanosine(527) in 16S rRNA + S-adenosyl-L-methionine = N(7)-methylguanosine(527) in 16S rRNA + S-adenosyl-L-homocysteine. Its function is as follows. Specifically methylates the N7 position of guanine in position 527 of 16S rRNA. The chain is Ribosomal RNA small subunit methyltransferase G from Anaeromyxobacter dehalogenans (strain 2CP-C).